Reading from the N-terminus, the 477-residue chain is UTP--glucose-1-phosphate uridylyltransferase (477 aa).

At alanine 2 the chain carries N-acetylalanine. UTP-binding positions include 92-95, lysine 106, glutamine 169, and glycine 198; that span reads LNGG. 94–95 contacts substrate; the sequence is GG. Residues histidine 199 and 227-229 contribute to the substrate site; that span reads NSD. Residues aspartate 229 and lysine 367 each coordinate UTP.

Belongs to the UDPGP type 1 family. As to quaternary structure, monomer. Requires Mg(2+) as cofactor.

It is found in the cytoplasm. It carries out the reaction alpha-D-glucose 1-phosphate + UTP + H(+) = UDP-alpha-D-glucose + diphosphate. With respect to regulation, inhibition by uncomplexed, free UTP. Plays a central role as a glucosyl donor in cellular metabolic pathways. In Solanum tuberosum (Potato), this protein is UTP--glucose-1-phosphate uridylyltransferase.